Consider the following 368-residue polypeptide: Phospho-N-acetylmuramoyl-pentapeptide-transferase (368 aa).

Transmembrane regions (helical) follow at residues 34 to 54 (GAVVTGALFVFLFGPWIIDHL), 79 to 99 (TPTMGGLMILSGLVVSTVLWA), 102 to 122 (LNPYVWIVLAVTLGFGFVGFY), 140 to 160 (ARLLIEAAIALVACYALVRLG), 176 to 196 (LVIKFGWMYVIFGAFVIVGAG), 207 to 227 (GLAIVPVMIASASFGLIAYLA), 247 to 267 (LAVLCGAVLGAGLGFLWFNAP), 271 to 291 (IFMGDTGSLALGGMLGSIAVA), 296 to 316 (IVLAVIGGLFVLEAVSVIVQV), and 345 to 365 (QIVIRFWIISVMLALVGLSTL).

It belongs to the glycosyltransferase 4 family. MraY subfamily. Requires Mg(2+) as cofactor.

The protein localises to the cell inner membrane. It carries out the reaction UDP-N-acetyl-alpha-D-muramoyl-L-alanyl-gamma-D-glutamyl-meso-2,6-diaminopimeloyl-D-alanyl-D-alanine + di-trans,octa-cis-undecaprenyl phosphate = di-trans,octa-cis-undecaprenyl diphospho-N-acetyl-alpha-D-muramoyl-L-alanyl-D-glutamyl-meso-2,6-diaminopimeloyl-D-alanyl-D-alanine + UMP. It participates in cell wall biogenesis; peptidoglycan biosynthesis. Its function is as follows. Catalyzes the initial step of the lipid cycle reactions in the biosynthesis of the cell wall peptidoglycan: transfers peptidoglycan precursor phospho-MurNAc-pentapeptide from UDP-MurNAc-pentapeptide onto the lipid carrier undecaprenyl phosphate, yielding undecaprenyl-pyrophosphoryl-MurNAc-pentapeptide, known as lipid I. This chain is Phospho-N-acetylmuramoyl-pentapeptide-transferase, found in Bradyrhizobium sp. (strain ORS 278).